The sequence spans 214 residues: Probable maleylacetoacetate isomerase (214 aa).

The GST N-terminal domain occupies 4–84 (QKPVLYSYWR…YLEETHPDVP (81 aa)). Glutathione contacts are provided by residues 14 to 19 (SSCSWR), V56, 68 to 69 (ES), Q108, and 112 to 114 (NLK). Residues 89 to 212 (DPIKRAHARA…HPDNQPDTGL (124 aa)) enclose the GST C-terminal domain.

This sequence belongs to the GST superfamily. Zeta family. It depends on glutathione as a cofactor.

It is found in the cytoplasm. The catalysed reaction is 4-maleylacetoacetate = 4-fumarylacetoacetate. It participates in amino-acid degradation; L-phenylalanine degradation; acetoacetate and fumarate from L-phenylalanine: step 5/6. The protein is Probable maleylacetoacetate isomerase (gst-42) of Caenorhabditis elegans.